The following is a 186-amino-acid chain: dCTP deaminase, dUMP-forming (186 aa).

DCTP contacts are provided by residues 99-104, Asp117, 125-127, Gln146, Tyr159, Lys166, and Gln170; these read KSSIAR and TLE. Glu127 (proton donor/acceptor) is an active-site residue.

It belongs to the dCTP deaminase family. In terms of assembly, homotrimer.

It catalyses the reaction dCTP + 2 H2O = dUMP + NH4(+) + diphosphate. It participates in pyrimidine metabolism; dUMP biosynthesis; dUMP from dCTP: step 1/1. In terms of biological role, bifunctional enzyme that catalyzes both the deamination of dCTP to dUTP and the hydrolysis of dUTP to dUMP without releasing the toxic dUTP intermediate. This Methanosphaerula palustris (strain ATCC BAA-1556 / DSM 19958 / E1-9c) protein is dCTP deaminase, dUMP-forming.